The primary structure comprises 183 residues: MLRFLEVVSEHIKNLRNHIDLETVGEMIKLIDSARSIFVIGAGRSGYIAKAFAMRLMHLGYTVYVVGETVTPRITDQDVLVAISGSGETTSVVNISKKAKDIGSKLVAVTGKRDSSLAKMADVVMVVKGKMKQERDEILSQLAPLGTMFELTAMIFLDALVAEIMMQKHLTEKDLEARHAVLE.

In terms of domain architecture, SIS spans 27–170 (MIKLIDSARS…VAEIMMQKHL (144 aa)).

This sequence belongs to the SIS family. PHI subfamily.

This is an uncharacterized protein from Archaeoglobus fulgidus (strain ATCC 49558 / DSM 4304 / JCM 9628 / NBRC 100126 / VC-16).